Consider the following 428-residue polypeptide: 3-phosphoshikimate 1-carboxyvinyltransferase (428 aa).

3-phosphoshikimate-binding residues include lysine 19, serine 20, and arginine 24. Phosphoenolpyruvate is bound at residue lysine 19. The phosphoenolpyruvate site is built by glycine 91 and arginine 119. The 3-phosphoshikimate site is built by serine 164, glutamine 166, aspartate 312, and lysine 339. Glutamine 166 serves as a coordination point for phosphoenolpyruvate. Aspartate 312 serves as the catalytic Proton acceptor. 2 residues coordinate phosphoenolpyruvate: arginine 343 and arginine 386.

This sequence belongs to the EPSP synthase family. In terms of assembly, monomer.

The protein resides in the cytoplasm. The enzyme catalyses 3-phosphoshikimate + phosphoenolpyruvate = 5-O-(1-carboxyvinyl)-3-phosphoshikimate + phosphate. The protein operates within metabolic intermediate biosynthesis; chorismate biosynthesis; chorismate from D-erythrose 4-phosphate and phosphoenolpyruvate: step 6/7. Catalyzes the transfer of the enolpyruvyl moiety of phosphoenolpyruvate (PEP) to the 5-hydroxyl of shikimate-3-phosphate (S3P) to produce enolpyruvyl shikimate-3-phosphate and inorganic phosphate. The chain is 3-phosphoshikimate 1-carboxyvinyltransferase from Bacillus subtilis (strain 168).